The chain runs to 123 residues: Alpha-lactalbumin A (123 aa).

The 123-residue stretch at 1–123 (KQFTKCELSQ…KLEQWLCEEL (123 aa)) folds into the C-type lysozyme domain. 4 disulfides stabilise this stretch: Cys-6-Cys-120, Cys-28-Cys-111, Cys-61-Cys-77, and Cys-73-Cys-91. Residues Lys-79, Asp-82, Asp-84, Asp-87, and Asp-88 each contribute to the Ca(2+) site.

The protein belongs to the glycosyl hydrolase 22 family. Lactose synthase (LS) is a heterodimer of a catalytic component, beta1,4-galactosyltransferase (beta4Gal-T1) and a regulatory component, alpha-lactalbumin (LA). As to expression, mammary gland specific. Secreted in milk.

It localises to the secreted. In terms of biological role, regulatory subunit of lactose synthase, changes the substrate specificity of galactosyltransferase in the mammary gland making glucose a good acceptor substrate for this enzyme. This enables LS to synthesize lactose, the major carbohydrate component of milk. In other tissues, galactosyltransferase transfers galactose onto the N-acetylglucosamine of the oligosaccharide chains in glycoproteins. This chain is Alpha-lactalbumin A, found in Equus caballus (Horse).